Reading from the N-terminus, the 517-residue chain is MSRSESSRPLLEMRRISKTFPAVRALDNVSLTVYPGEIHSLMGENGAGKSTLMKILSGAYRADAGGEILIDGERIDVDGPLAARDAGVAVIYQELCLAPNLTVAENIYVGRELRRGNRRWGTIDRAAMARGCEDVLARLGAPFGPDTLVGTLSIAEQQLVEIARAVHTRARILVMDEPTTPLSSRETEHLFGLIRQLREEGLAIIYISHRMAEIYELSDRVSVLRDGSYVGTLERESLSAERLVAMMVGRDISGFYKKEHAPYDPGHLLLSVRDIADAERVRGCSLDLHAGEVLGIAGLVGAGRTELARLIFGAEPRTRGDVKLGDRAFGAHSPRDAIDAGLVYLTEDRKRQGLFLDMSVRDNINISVCNRDARLGALDLARGAQRARDAIASLSIRVPNANVNVGALSGGNQQKVLLSRLLETKPRVLILDEPTRGVDIGAKSEIYRIINELARAGVGVIVISSELPEIIGVADRVLVMREGEIAGELGGHTHTPITQEAIIALATGSQAELADAH.

ABC transporter domains follow at residues 11–251 (LEMR…VGRD) and 263–507 (YDPG…ALAT). 43–50 (GENGAGKS) provides a ligand contact to ATP.

It belongs to the ABC transporter superfamily. Ribose importer (TC 3.A.1.2.1) family. The complex is composed of an ATP-binding protein (RbsA), two transmembrane proteins (RbsC) and a solute-binding protein (RbsB).

It localises to the cell inner membrane. It carries out the reaction D-ribose(out) + ATP + H2O = D-ribose(in) + ADP + phosphate + H(+). Its function is as follows. Part of the ABC transporter complex RbsABC involved in ribose import. Responsible for energy coupling to the transport system. This Burkholderia ambifaria (strain ATCC BAA-244 / DSM 16087 / CCUG 44356 / LMG 19182 / AMMD) (Burkholderia cepacia (strain AMMD)) protein is Ribose import ATP-binding protein RbsA 1.